Consider the following 375-residue polypeptide: N5-carboxyaminoimidazole ribonucleotide synthase (375 aa).

ATP contacts are provided by residues arginine 108, lysine 148, 153-159 (GYDGKGQ), 183-186 (EQYL), glutamate 191, histidine 214, and 268-269 (NE). In terms of domain architecture, ATP-grasp spans 112 to 298 (KQTLQDSGSN…QFDTHIKAIT (187 aa)).

Belongs to the PurK/PurT family. Homodimer.

It catalyses the reaction 5-amino-1-(5-phospho-beta-D-ribosyl)imidazole + hydrogencarbonate + ATP = 5-carboxyamino-1-(5-phospho-D-ribosyl)imidazole + ADP + phosphate + 2 H(+). It functions in the pathway purine metabolism; IMP biosynthesis via de novo pathway; 5-amino-1-(5-phospho-D-ribosyl)imidazole-4-carboxylate from 5-amino-1-(5-phospho-D-ribosyl)imidazole (N5-CAIR route): step 1/2. Catalyzes the ATP-dependent conversion of 5-aminoimidazole ribonucleotide (AIR) and HCO(3)(-) to N5-carboxyaminoimidazole ribonucleotide (N5-CAIR). This is N5-carboxyaminoimidazole ribonucleotide synthase from Staphylococcus saprophyticus subsp. saprophyticus (strain ATCC 15305 / DSM 20229 / NCIMB 8711 / NCTC 7292 / S-41).